Reading from the N-terminus, the 390-residue chain is S-adenosylmethionine synthase 2 (390 aa).

Glu-9 is a binding site for Mg(2+). His-15 is an ATP binding site. Glu-43 serves as a coordination point for K(+). 2 residues coordinate L-methionine: Glu-56 and Gln-99. ATP is bound by residues 167–169 (DGK), 235–238 (SGRF), Asp-246, 252–253 (RK), Ala-269, Lys-273, and Lys-277. Position 246 (Asp-246) interacts with L-methionine. Lys-277 contacts L-methionine.

The protein belongs to the AdoMet synthase family. As to quaternary structure, homotetramer. Requires Mn(2+) as cofactor. It depends on Mg(2+) as a cofactor. Co(2+) serves as cofactor. The cofactor is K(+).

The protein localises to the cytoplasm. The catalysed reaction is L-methionine + ATP + H2O = S-adenosyl-L-methionine + phosphate + diphosphate. It participates in amino-acid biosynthesis; S-adenosyl-L-methionine biosynthesis; S-adenosyl-L-methionine from L-methionine: step 1/1. In terms of biological role, catalyzes the formation of S-adenosylmethionine from methionine and ATP. The reaction comprises two steps that are both catalyzed by the same enzyme: formation of S-adenosylmethionine (AdoMet) and triphosphate, and subsequent hydrolysis of the triphosphate. The protein is S-adenosylmethionine synthase 2 (METK2) of Solanum tuberosum (Potato).